A 1328-amino-acid polypeptide reads, in one-letter code: Mitogen-activated protein kinase kinase kinase 19 (1328 aa).

Basic and acidic residues predominate over residues 1-19; it reads MSSMPKPERHAESLLDICH. Disordered regions lie at residues 1-28, 44-74, 344-380, and 524-561; these read MSSM…PTDL, RSEE…QDWQ, VREE…AKNY, and QEND…GPIK. The segment covering 344-361 has biased composition (basic and acidic residues); the sequence is VREEDIDCHGSKTRKPEE. A compositionally biased stretch (polar residues) spans 364–377; the sequence is SQYLSSRKNESSVA. Residues 524–542 are compositionally biased toward basic and acidic residues; the sequence is QENDKHKMNSHRSKLDSKT. The 264-residue stretch at 1061–1324 folds into the Protein kinase domain; it reads WTKGEILGKG…ALQLLKHSFL (264 aa). ATP-binding positions include 1067–1075 and Lys-1089; that span reads LGKGAYGTV. Catalysis depends on Asp-1186, which acts as the Proton acceptor.

It belongs to the protein kinase superfamily. STE Ser/Thr protein kinase family. STE20 subfamily.

The catalysed reaction is L-seryl-[protein] + ATP = O-phospho-L-seryl-[protein] + ADP + H(+). The enzyme catalyses L-threonyl-[protein] + ATP = O-phospho-L-threonyl-[protein] + ADP + H(+). The sequence is that of Mitogen-activated protein kinase kinase kinase 19 (MAP3K19) from Homo sapiens (Human).